Consider the following 89-residue polypeptide: Protein FAM25A (89 aa).

The protein belongs to the FAM25 family.

The protein is Protein FAM25A of Mus musculus (Mouse).